A 307-amino-acid chain; its full sequence is Epimerase family protein ML0860 (307 aa).

It belongs to the NAD(P)-dependent epimerase/dehydratase family. SDR39U1 subfamily.

The polypeptide is Epimerase family protein ML0860 (Mycobacterium leprae (strain TN)).